A 105-amino-acid chain; its full sequence is Large ribosomal subunit protein eL42z/eL42y (105 aa).

The segment at tyrosine 28 to valine 57 is disordered.

Belongs to the eukaryotic ribosomal protein eL42 family.

This chain is Large ribosomal subunit protein eL42z/eL42y (RPL36AA), found in Arabidopsis thaliana (Mouse-ear cress).